Here is a 402-residue protein sequence, read N- to C-terminus: Arginine biosynthesis bifunctional protein ArgJ (402 aa).

Residues threonine 149, lysine 175, threonine 186, glutamate 266, asparagine 397, and threonine 402 each contribute to the substrate site. Threonine 186 acts as the Nucleophile in catalysis.

This sequence belongs to the ArgJ family. As to quaternary structure, heterotetramer of two alpha and two beta chains.

It localises to the cytoplasm. It carries out the reaction N(2)-acetyl-L-ornithine + L-glutamate = N-acetyl-L-glutamate + L-ornithine. The enzyme catalyses L-glutamate + acetyl-CoA = N-acetyl-L-glutamate + CoA + H(+). The protein operates within amino-acid biosynthesis; L-arginine biosynthesis; L-ornithine and N-acetyl-L-glutamate from L-glutamate and N(2)-acetyl-L-ornithine (cyclic): step 1/1. It functions in the pathway amino-acid biosynthesis; L-arginine biosynthesis; N(2)-acetyl-L-ornithine from L-glutamate: step 1/4. Its function is as follows. Catalyzes two activities which are involved in the cyclic version of arginine biosynthesis: the synthesis of N-acetylglutamate from glutamate and acetyl-CoA as the acetyl donor, and of ornithine by transacetylation between N(2)-acetylornithine and glutamate. This Prochlorococcus marinus subsp. pastoris (strain CCMP1986 / NIES-2087 / MED4) protein is Arginine biosynthesis bifunctional protein ArgJ.